Here is a 391-residue protein sequence, read N- to C-terminus: Putative 12-oxophytodienoate reductase 6 (391 aa).

FMN-binding positions include 42 to 44 (PMT), alanine 75, and glutamine 117. 189–192 (HGAN) is a binding site for substrate. Tyrosine 194 (proton donor) is an active-site residue. Arginine 241 provides a ligand contact to FMN. Arginine 282 contacts substrate. Residues glycine 312 and 333–334 (GR) contribute to the FMN site. Residues 372–391 (YPFLDEHHHDDDDDSNAPSA) are disordered. Over residues 382–391 (DDDDSNAPSA) the composition is skewed to acidic residues.

Belongs to the NADH:flavin oxidoreductase/NADH oxidase family. FMN serves as cofactor.

Functionally, putative oxophytodienoate reductase that may be involved in the biosynthesis or metabolism of oxylipin signaling molecules. The sequence is that of Putative 12-oxophytodienoate reductase 6 (OPR6) from Oryza sativa subsp. japonica (Rice).